We begin with the raw amino-acid sequence, 231 residues long: Platelet-activating factor acetylhydrolase IB subunit alpha1 (231 aa).

Residue S2 is modified to N-acetylserine. S2 carries the post-translational modification Phosphoserine. Residues S47, D192, and H195 contribute to the active site.

Belongs to the 'GDSL' lipolytic enzyme family. Platelet-activating factor acetylhydrolase IB beta/gamma subunits subfamily. Forms a catalytic dimer which is either homodimer (alpha1/alpha1 homodimer) or heterodimer with PAFAH1B2 (alpha1/alpha2 heterodimer). Component of the cytosolic (PAF-AH (I)) heterotetrameric enzyme, which is composed of PAFAH1B1 (beta), PAFAH1B2 (alpha2) and PAFAH1B3 (alpha1) subunits. The catalytic activity of the enzyme resides in the alpha1 (PAFAH1B3) and alpha2 (PAFAH1B2) subunits, whereas the beta subunit (PAFAH1B1) has regulatory activity. Trimer formation is not essential for the catalytic activity. Interacts with VLDLR; this interaction may modulate the Reelin pathway. In the adult, expressed in brain, skeletal muscle, kidney, thymus, spleen, colon, testis, ovary and peripheral blood leukocytes. In the fetus, highest expression occurs in brain.

The protein resides in the cytoplasm. The enzyme catalyses a 1-O-alkyl-2-acetyl-sn-glycero-3-phosphocholine + H2O = a 1-O-alkyl-sn-glycero-3-phosphocholine + acetate + H(+). It carries out the reaction 1-O-hexadecyl-2-acetyl-sn-glycero-3-phosphocholine + H2O = 1-O-hexadecyl-sn-glycero-3-phosphocholine + acetate + H(+). It catalyses the reaction 1-O-hexadecyl-2-acetyl-sn-glycero-3-phosphate + H2O = 1-O-hexadecyl-sn-glycero-3-phosphate + acetate + H(+). With respect to regulation, beta subunit (PAFAH1B1) inhibits the acetylhydrolase activity of the alpha1/alpha1 catalytic homodimer. Its function is as follows. Alpha1 catalytic subunit of the cytosolic type I platelet-activating factor (PAF) acetylhydrolase (PAF-AH (I)) heterotetrameric enzyme that catalyzes the hydrolyze of the acetyl group at the sn-2 position of PAF and its analogs and modulates the action of PAF. The activity and substrate specificity of PAF-AH (I) are affected by its subunit composition. Both alpha1/alpha1 homodimer (PAFAH1B3/PAFAH1B3 homodimer) and alpha1/alpha2 heterodimer(PAFAH1B3/PAFAH1B2 heterodimer) hydrolyze 1-O-alkyl-2-acetyl-sn-glycero-3-phosphoric acid (AAGPA) more efficiently than PAF, but they have little hydrolytic activity towards 1-O-alkyl-2-acetyl-sn-glycero-3-phosphorylethanolamine (AAGPE). Plays an important role during the development of brain. The protein is Platelet-activating factor acetylhydrolase IB subunit alpha1 of Homo sapiens (Human).